Consider the following 383-residue polypeptide: Delta(12)-fatty-acid desaturase FAD2 (383 aa).

2 helical membrane-spanning segments follow: residues 56 to 76 (VVYD…YFHL) and 84 to 104 (VAWP…WVIA). The Histidine box-1 motif lies at 105–109 (HECGH). Residues 117 to 137 (LLDDIVGLVLHSCLLVPYFSW) form a helical membrane-spanning segment. The Histidine box-2 motif lies at 141–145 (HRRHH). Helical transmembrane passes span 179–199 (LFTL…FNVS), 225–245 (IYIS…LAAA), and 249–269 (AWVI…LVMI). Residues 315–319 (HVAHH) carry the Histidine box-3 motif.

It belongs to the fatty acid desaturase type 1 family. As to expression, expressed in leaves and seeds.

Its subcellular location is the endoplasmic reticulum membrane. The catalysed reaction is (9Z)-octadecenoyl-CoA + 2 Fe(II)-[cytochrome b5] + O2 + 2 H(+) = (9Z,12Z)-octadecadienoyl-CoA + 2 Fe(III)-[cytochrome b5] + 2 H2O. It catalyses the reaction (9Z)-hexadecenoyl-CoA + 2 Fe(II)-[cytochrome b5] + O2 + 2 H(+) = (9Z,12Z)-hexadecadienoyl-CoA + 2 Fe(III)-[cytochrome b5] + 2 H2O. It functions in the pathway lipid metabolism; polyunsaturated fatty acid biosynthesis. In terms of biological role, catalyzes the desaturation of oleic acid (18:1(9Z)) to linoleic acid (18:2(9Z,12Z)). This Vernicia fordii (Tung) protein is Delta(12)-fatty-acid desaturase FAD2.